Reading from the N-terminus, the 369-residue chain is MLRNTFFRNTSRRFLATVKQPSIGRYTGKPNPSTGKYTVSFIEGDGIGPEISKSVKKIFSAANVPIEWESCDVSPIFVNGLTTIPDPAVQSITKNLVALKGPLATPIGKGHRSLNLTLRKTFGLFANVRPAKSIEGFKTTYENVDLVLIRENTEGEYSGIEHIVCPGVVQSIKLITRDASERVIRYAFEYARAIGRPRVIVVHKSTIQRLADGLFVNVAKELSKEYPDLTLETELIDNSVLKVVTNPSAYTDAVSVCPNLYGDILSDLNSGLSAGSLGLTPSANIGHKISIFEAVHGSAPDIAGQDKANPTALLLSSVMMLNHMGLTNHADQIQNAVLSTIASGPENRTGDLAGTATTSSFTEAVIKRL.

The transit peptide at methionine 1–leucine 15 directs the protein to the mitochondrion. Threonine 105 carries the post-translational modification Phosphothreonine. Substrate-binding residues include arginine 119, arginine 129, and arginine 150. Threonine 153 is modified (phosphothreonine). Aspartate 237 serves as a coordination point for substrate. Mg(2+) is bound by residues aspartate 237, aspartate 263, and aspartate 267. Threonine 327 and threonine 349 each carry phosphothreonine.

The protein belongs to the isocitrate and isopropylmalate dehydrogenases family. As to quaternary structure, octamer of two non-identical subunits IDH1 and IDH2. Mg(2+) is required as a cofactor. It depends on Mn(2+) as a cofactor.

The protein resides in the mitochondrion matrix. It catalyses the reaction D-threo-isocitrate + NAD(+) = 2-oxoglutarate + CO2 + NADH. Allosterically regulated by several compounds including AMP, NAD(+), and citrate. Functionally, performs an essential role in the oxidative function of the citric acid cycle. Also binds RNA; specifically to the 5'-untranslated leaders of mitochondrial mRNAs. This is Isocitrate dehydrogenase [NAD] subunit 2, mitochondrial (IDH2) from Saccharomyces cerevisiae (strain ATCC 204508 / S288c) (Baker's yeast).